A 158-amino-acid chain; its full sequence is Protein hunchback (158 aa).

Residues 18–34 (HNHHHHHHHGHHQHQQR) are compositionally biased toward basic residues. 2 disordered regions span residues 18 to 96 (HNHH…TTTA) and 118 to 158 (LTPP…KYMA). Residues 41 to 50 (ASSPHQSPLP) show a composition bias toward polar residues. Positions 52–65 (LQLEQYLKQQQQQP) are enriched in low complexity. The span at 139–158 (EPEKEHDLMSNSSEDMKYMA) shows a compositional bias: basic and acidic residues.

The protein belongs to the hunchback C2H2-type zinc-finger protein family.

The protein localises to the nucleus. Its function is as follows. Gap class segmentation protein that controls development of head structures. In Drosophila mimica (Fruit fly), this protein is Protein hunchback (hb).